The following is a 492-amino-acid chain: MAGLLHLVLLSTALGGLLRPAGSVFLPRDQAHRVLQRARRANSFLEEVKQGNLERECLEEACSLEEAREVFEDAEQTDEFWSKYKDGDQCEGHPCLNQGHCKDGIGDYTCTCAEGFEGKNCEFSTREICSLDNGGCDQFCREERSEVRCSCAHGYVLGDDSKSCVSTERFPCGKFTQGRSRRWAIHTSEDALDASELEHYDPADLSPTESSLDLLGLNRTEPSAGEDGSQVVRIVGGRDCAEGECPWQALLVNEENEGFCGGTILNEFYVLTAAHCLHQAKRFTVRVGDRNTEQEEGNEMAHEVEMTVKHSRFVKETYDFDIAVLRLKTPIRFRRNVAPACLPEKDWAEATLMTQKTGIVSGFGRTHEKGRLSSTLKMLEVPYVDRSTCKLSSSFTITPNMFCAGYDTQPEDACQGDSGGPHVTRFKDTYFVTGIVSWGEGCARKGKFGVYTKVSNFLKWIDKIMKARAGAAGSRGHSEAPATWTVPPPLPL.

The N-terminal stretch at 1-23 (MAGLLHLVLLSTALGGLLRPAGS) is a signal peptide. A propeptide spanning residues 24–40 (VFLPRDQAHRVLQRARR) is cleaved from the precursor. The Gla domain maps to 41–85 (ANSFLEEVKQGNLERECLEEACSLEEAREVFEDAEQTDEFWSKYK). 12 positions are modified to 4-carboxyglutamate: Glu-46, Glu-47, Glu-54, Glu-56, Glu-59, Glu-60, Glu-65, Glu-66, Glu-69, Glu-72, Glu-75, and Glu-79. A disulfide bridge links Cys-57 with Cys-62. In terms of domain architecture, EGF-like 1; calcium-binding spans 86–122 (DGDQCEGHPCLNQGHCKDGIGDYTCTCAEGFEGKNCE). 11 cysteine pairs are disulfide-bonded: Cys-90–Cys-101, Cys-95–Cys-110, Cys-112–Cys-121, Cys-129–Cys-140, Cys-136–Cys-149, Cys-151–Cys-164, Cys-172–Cys-341, Cys-240–Cys-245, Cys-260–Cys-276, Cys-389–Cys-403, and Cys-414–Cys-442. The residue at position 103 (Asp-103) is a (3R)-3-hydroxyaspartate. The EGF-like 2 domain maps to 125–165 (TREICSLDNGGCDQFCREERSEVRCSCAHGYVLGDDSKSCV). A propeptide spans 183 to 233 (WAIHTSEDALDASELEHYDPADLSPTESSLDLLGLNRTEPSAGEDGSQVVR) (activation peptide). A Sulfotyrosine modification is found at Tyr-200. Thr-208 carries O-linked (GalNAc...) threonine glycosylation. Residue Asn-218 is glycosylated (N-linked (GlcNAc...) asparagine). A Peptidase S1 domain is found at 234-466 (IVGGRDCAEG…FLKWIDKIMK (233 aa)). Active-site charge relay system residues include His-275 and Asp-321. Ser-418 serves as the catalytic Charge relay system. A disordered region spans residues 472-492 (AGSRGHSEAPATWTVPPPLPL). Positions 476-492 (GHSEAPATWTVPPPLPL) are cleaved as a propeptide — may be removed but is not necessary for activation. The O-linked (GalNAc...) threonine glycan is linked to Thr-485.

Belongs to the peptidase S1 family. The two chains are formed from a single-chain precursor by the excision of two Arg residues and are held together by 1 or more disulfide bonds. Forms a heterodimer with SERPINA5. Interacts (activated) with guianensin, an anticoagulant protein from Simulium guianense saliva. Interacts (activated) with simukunin, an anticoagulant protein from Simulium vittatum saliva. The vitamin K-dependent, enzymatic carboxylation of some glutamate residues allows the modified protein to bind calcium. In terms of processing, N- and O-glycosylated. Post-translationally, proteolytically cleaved and activated by cathepsin CTSG. The activation peptide is cleaved by factor IXa (in the intrinsic pathway), or by factor VIIa (in the extrinsic pathway). The iron and 2-oxoglutarate dependent 3-hydroxylation of aspartate and asparagine is (R) stereospecific within EGF domains.

It localises to the secreted. The enzyme catalyses Selective cleavage of Arg-|-Thr and then Arg-|-Ile bonds in prothrombin to form thrombin.. Its activity is regulated as follows. Inhibited by SERPINA5. Functionally, factor Xa is a vitamin K-dependent glycoprotein that converts prothrombin to thrombin in the presence of factor Va, calcium and phospholipid during blood clotting. Factor Xa activates pro-inflammatory and pro-fibrotic signaling pathways in a protease-activated receptor (PAR)-dependent manner. The protein is Coagulation factor X (F10) of Bos taurus (Bovine).